We begin with the raw amino-acid sequence, 284 residues long: Hypersensitive-induced response protein 1 (284 aa).

Residue G2 is the site of N-myristoyl glycine attachment.

As to quaternary structure, interacts with LRR1.

It localises to the cell membrane. Its function is as follows. Positive regulator of hypersensitive response (HR)-like cell death. May be involved in potassium ion channel regulation. In Oryza sativa subsp. japonica (Rice), this protein is Hypersensitive-induced response protein 1.